We begin with the raw amino-acid sequence, 864 residues long: Leucine--tRNA ligase (864 aa).

The 'HIGH' region signature appears at 42–52; sequence PYPSGKLHMGH. The short motif at 624-628 is the 'KMSKS' region element; it reads KMSKS. Lysine 627 provides a ligand contact to ATP.

Belongs to the class-I aminoacyl-tRNA synthetase family.

Its subcellular location is the cytoplasm. It catalyses the reaction tRNA(Leu) + L-leucine + ATP = L-leucyl-tRNA(Leu) + AMP + diphosphate. This chain is Leucine--tRNA ligase, found in Burkholderia multivorans (strain ATCC 17616 / 249).